Here is a 629-residue protein sequence, read N- to C-terminus: tRNA uridine 5-carboxymethylaminomethyl modification enzyme MnmG (629 aa).

Residues 13–18 (GGGHAG), Val125, and Ser180 each bind FAD. 273–287 (GPRYCPSIEDKVMRF) serves as a coordination point for NAD(+). Gln370 provides a ligand contact to FAD.

Belongs to the MnmG family. In terms of assembly, homodimer. Heterotetramer of two MnmE and two MnmG subunits. FAD serves as cofactor.

The protein resides in the cytoplasm. NAD-binding protein involved in the addition of a carboxymethylaminomethyl (cmnm) group at the wobble position (U34) of certain tRNAs, forming tRNA-cmnm(5)s(2)U34. This Shigella flexneri serotype 5b (strain 8401) protein is tRNA uridine 5-carboxymethylaminomethyl modification enzyme MnmG.